A 56-amino-acid polypeptide reads, in one-letter code: Large ribosomal subunit protein bL32 (56 aa).

The interval 1-37 (MAVQQNKKSRSRRDMRRSHDALTTAAVSVDKASGETH) is disordered. Over residues 7-16 (KKSRSRRDMR) the composition is skewed to basic residues.

This sequence belongs to the bacterial ribosomal protein bL32 family.

In Haemophilus influenzae (strain PittEE), this protein is Large ribosomal subunit protein bL32.